The sequence spans 216 residues: MLKKIIILFLGMFLLSACTDNFRSYFQRSANNRLVDSKGAKGGKRKPVYNNKYITLAKKNIVEDNLDDDNDDDYDSDSPLRGERIDPVKRNREMYLKMIKRDIARQKAEAGFAESDDDMTLSRANKKVRKDDSDKEKKIQEELNQIKAMLRETKRDISKYTCPNAVVNQNYAPPVTNYEPVNYPPVKNSKPYNNNSKVKQKFILEDDDNGSNACSI.

The first 17 residues, 1–17 (MLKKIIILFLGMFLLSA), serve as a signal peptide directing secretion. Residue cysteine 18 is the site of N-palmitoyl cysteine attachment. A lipid anchor (S-diacylglycerol cysteine) is attached at cysteine 18. Residues 133 to 162 (SDKEKKIQEELNQIKAMLRETKRDISKYTC) adopt a coiled-coil conformation.

The protein localises to the cell membrane. This is an uncharacterized protein from Rickettsia conorii (strain ATCC VR-613 / Malish 7).